Reading from the N-terminus, the 292-residue chain is 11-beta-hydroxysteroid dehydrogenase 1 (292 aa).

A helical transmembrane segment spans residues 7-24; that stretch reads YLLPILGIFLAYYYYSAN.

Belongs to the short-chain dehydrogenases/reductases (SDR) family. As to quaternary structure, homodimer. Expressed highest in liver and ovaries (corpora lutea, granulosa cells, thecal, uterine caruncle and intercarunculer tissues), lower expression in kidney and spleen, and lowest in the adrenal.

Its subcellular location is the endoplasmic reticulum membrane. It carries out the reaction an 11beta-hydroxysteroid + NADP(+) = an 11-oxosteroid + NADPH + H(+). The catalysed reaction is corticosterone + NADP(+) = 11-dehydrocorticosterone + NADPH + H(+). It catalyses the reaction cortisone + NADPH + H(+) = cortisol + NADP(+). The enzyme catalyses a 7beta-hydroxysteroid + NADP(+) = a 7-oxosteroid + NADPH + H(+). It carries out the reaction 7-oxocholesterol + NADPH + H(+) = 7beta-hydroxycholesterol + NADP(+). The catalysed reaction is chenodeoxycholate + NADP(+) = 7-oxolithocholate + NADPH + H(+). It catalyses the reaction 7-oxolithocholate + NADPH + H(+) = ursodeoxycholate + NADP(+). The enzyme catalyses glycochenodeoxycholate + NADP(+) = 7-oxoglycolithocholate + NADPH + H(+). It carries out the reaction taurochenodeoxycholate + NADP(+) = 7-oxotaurolithocholate + NADPH + H(+). The catalysed reaction is tauroursodeoxycholate + NADP(+) = 7-oxotaurolithocholate + NADPH + H(+). It catalyses the reaction glycoursodeoxycholate + NADP(+) = 7-oxoglycolithocholate + NADPH + H(+). The enzyme catalyses 7-oxopregnenolone + NADPH + H(+) = 7beta-hydroxypregnenolone + NADP(+). It carries out the reaction 3beta,7alpha-dihydroxyandrost-5-en-17-one + NADP(+) = 3beta-hydroxy-5-androstene-7,17-dione + NADPH + H(+). The catalysed reaction is 3beta-hydroxy-5-androstene-7,17-dione + NADPH + H(+) = 3beta,7beta-dihydroxyandrost-5-en-17-one + NADP(+). It catalyses the reaction 3beta-hydroxy-5alpha-androstane-7,17-dione + NADPH + H(+) = 3beta,7beta-dihydroxy-5alpha-androstan-17-one + NADP(+). Its function is as follows. Controls the reversible conversion of biologically active glucocorticoids such as cortisone to cortisol, and 11-dehydrocorticosterone to corticosterone in the presence of NADP(H). Participates in the corticosteroid receptor-mediated anti-inflammatory response, as well as metabolic and homeostatic processes. Plays a role in the secretion of aqueous humor in the eye, maintaining a normotensive, intraocular environment. Bidirectional in vitro, predominantly functions as a reductase in vivo, thereby increasing the concentration of active glucocorticoids. It has broad substrate specificity, besides glucocorticoids, it accepts other steroid and sterol substrates. Interconverts 7-oxo- and 7-hydroxy-neurosteroids such as 7-oxopregnenolone and 7beta-hydroxypregnenolone, 7-oxodehydroepiandrosterone (3beta-hydroxy-5-androstene-7,17-dione) and 7beta-hydroxydehydroepiandrosterone (3beta,7beta-dihydroxyandrost-5-en-17-one), among others. Catalyzes the stereo-specific conversion of the major dietary oxysterol, 7-ketocholesterol (7-oxocholesterol), into the more polar 7-beta-hydroxycholesterol metabolite. 7-oxocholesterol is one of the most important oxysterols, it participates in several events such as induction of apoptosis, accumulation in atherosclerotic lesions, lipid peroxidation, and induction of foam cell formation. Mediates the 7-oxo reduction of 7-oxolithocholate mainly to chenodeoxycholate, and to a lesser extent to ursodeoxycholate, both in its free form and when conjugated to glycine or taurine, providing a link between glucocorticoid activation and bile acid metabolism. Catalyzes the synthesis of 7-beta-25-dihydroxycholesterol from 7-oxo-25-hydroxycholesterol in vitro, which acts as a ligand for the G-protein-coupled receptor (GPCR) Epstein-Barr virus-induced gene 2 (EBI2) and may thereby regulate immune cell migration. This is 11-beta-hydroxysteroid dehydrogenase 1 from Bos taurus (Bovine).